A 197-amino-acid polypeptide reads, in one-letter code: UPF0215 protein MK0057 (197 aa).

Belongs to the UPF0215 family.

The chain is UPF0215 protein MK0057 from Methanopyrus kandleri (strain AV19 / DSM 6324 / JCM 9639 / NBRC 100938).